A 259-amino-acid chain; its full sequence is Global transcriptional regulator CodY (259 aa).

Residues 1–155 (MDLLTRTRKI…GATVVGMEIL (155 aa)) are GAF domain. A DNA-binding region (H-T-H motif) is located at residues 203-222 (ASKIADRVGITRSVIVNALR). Ser-215 bears the Phosphoserine mark.

It belongs to the CodY family.

Its subcellular location is the cytoplasm. Its function is as follows. DNA-binding global transcriptional regulator which is involved in the adaptive response to starvation and acts by directly or indirectly controlling the expression of numerous genes in response to nutrient availability. During rapid exponential growth, CodY is highly active and represses genes whose products allow adaptation to nutrient depletion. This is Global transcriptional regulator CodY from Shouchella clausii (strain KSM-K16) (Alkalihalobacillus clausii).